A 76-amino-acid polypeptide reads, in one-letter code: Large ribosomal subunit protein bL31 (76 aa).

It belongs to the bacterial ribosomal protein bL31 family. Type A subfamily. As to quaternary structure, part of the 50S ribosomal subunit.

Functionally, binds the 23S rRNA. The chain is Large ribosomal subunit protein bL31 from Rhizorhabdus wittichii (strain DSM 6014 / CCUG 31198 / JCM 15750 / NBRC 105917 / EY 4224 / RW1) (Sphingomonas wittichii).